Here is a 485-residue protein sequence, read N- to C-terminus: Glutamyl-tRNA(Gln) amidotransferase subunit A (485 aa).

Active-site charge relay system residues include Lys74 and Ser149. The active-site Acyl-ester intermediate is the Ser173.

The protein belongs to the amidase family. GatA subfamily. In terms of assembly, heterotrimer of A, B and C subunits.

The catalysed reaction is L-glutamyl-tRNA(Gln) + L-glutamine + ATP + H2O = L-glutaminyl-tRNA(Gln) + L-glutamate + ADP + phosphate + H(+). In terms of biological role, allows the formation of correctly charged Gln-tRNA(Gln) through the transamidation of misacylated Glu-tRNA(Gln) in organisms which lack glutaminyl-tRNA synthetase. The reaction takes place in the presence of glutamine and ATP through an activated gamma-phospho-Glu-tRNA(Gln). The sequence is that of Glutamyl-tRNA(Gln) amidotransferase subunit A from Synechococcus sp. (strain RCC307).